The primary structure comprises 273 residues: NADPH-dependent 7-cyano-7-deazaguanine reductase (273 aa).

80 to 82 contacts substrate; it reads IES. 82–83 serves as a coordination point for NADPH; sequence SK. Catalysis depends on Cys-180, which acts as the Thioimide intermediate. Asp-187 functions as the Proton donor in the catalytic mechanism. 219 to 220 is a binding site for substrate; sequence HE. 248–249 is an NADPH binding site; that stretch reads RG.

It belongs to the GTP cyclohydrolase I family. QueF type 2 subfamily. In terms of assembly, homodimer.

Its subcellular location is the cytoplasm. The enzyme catalyses 7-aminomethyl-7-carbaguanine + 2 NADP(+) = 7-cyano-7-deazaguanine + 2 NADPH + 3 H(+). The protein operates within tRNA modification; tRNA-queuosine biosynthesis. Functionally, catalyzes the NADPH-dependent reduction of 7-cyano-7-deazaguanine (preQ0) to 7-aminomethyl-7-deazaguanine (preQ1). The protein is NADPH-dependent 7-cyano-7-deazaguanine reductase of Bordetella avium (strain 197N).